A 549-amino-acid polypeptide reads, in one-letter code: Glucose-6-phosphate isomerase (549 aa).

The active-site Proton donor is the glutamate 355. Residues histidine 387 and lysine 515 contribute to the active site.

It belongs to the GPI family.

It is found in the cytoplasm. It catalyses the reaction alpha-D-glucose 6-phosphate = beta-D-fructose 6-phosphate. The protein operates within carbohydrate biosynthesis; gluconeogenesis. It functions in the pathway carbohydrate degradation; glycolysis; D-glyceraldehyde 3-phosphate and glycerone phosphate from D-glucose: step 2/4. Catalyzes the reversible isomerization of glucose-6-phosphate to fructose-6-phosphate. The protein is Glucose-6-phosphate isomerase of Histophilus somni (strain 2336) (Haemophilus somnus).